The primary structure comprises 76 residues: uncharacterized protein (76 aa).

A helical membrane pass occupies residues 53–70 (STKLHIIWFCIFAIFIAV).

It localises to the membrane. This is an uncharacterized protein from Haemophilus influenzae (strain ATCC 51907 / DSM 11121 / KW20 / Rd).